Here is a 214-residue protein sequence, read N- to C-terminus: ER lumen protein-retaining receptor 3 (214 aa).

The Lumenal portion of the chain corresponds to 1-4 (MNIF). A helical membrane pass occupies residues 5-24 (RILGDVSHLLAIIILLLKMW). At 25–32 (KSKSCAGI) the chain is on the cytoplasmic side. The chain crosses the membrane as a helical span at residues 33–52 (SGKSQLLFALVFTTRYLDLF). The interval 47–48 (RY) is interaction with the K-D-E-L motif on target proteins. Residues 53–58 (TVFISP) are Lumenal-facing. The chain crosses the membrane as a helical span at residues 59-79 (YNTVMKIIFLACAYVTVYLIY). Residues 80-92 (GKLRKSYDSENDT) lie on the Cytoplasmic side of the membrane. Residues 93 to 110 (FRLEFLLVPVIGLSFLEN) form a helical membrane-spanning segment. Residues 111 to 116 (YEFTPL) are Lumenal-facing. The chain crosses the membrane as a helical span at residues 117 to 135 (EILWTFSIYLESVAILPQL). The Cytoplasmic segment spans residues 136–149 (FMISKTGEAESITT). Residues 150-168 (HYLFFLGLYRVLYLANWIW) traverse the membrane as a helical segment. Residues 159-169 (RVLYLANWIWR) form an interaction with the K-D-E-L motif on target proteins region. Topologically, residues 169–178 (RYHTEKFYDQ) are lumenal. A helical transmembrane segment spans residues 179–199 (IAVVSGVVQTIFYFDFFYLYV). Over 200–214 (TKVLKGKKLSLPMPV) the chain is Cytoplasmic. Residues 204-207 (KGKK) are important for recycling of cargo proteins with the sequence motif K-D-E-L from the Golgi to the endoplasmic reticulum.

This sequence belongs to the ERD2 family.

Its subcellular location is the endoplasmic reticulum membrane. It is found in the golgi apparatus membrane. The protein localises to the cytoplasmic vesicle. The protein resides in the COPI-coated vesicle membrane. In terms of biological role, receptor for the C-terminal sequence motif K-D-E-L that is present on endoplasmic reticulum resident proteins and that mediates their recycling from the Golgi back to the endoplasmic reticulum. The polypeptide is ER lumen protein-retaining receptor 3 (kdelr3) (Xenopus laevis (African clawed frog)).